Consider the following 140-residue polypeptide: MATLHVDVVSAEEAIFTGEAKFVVLPGEAGELGILPGHTPLISRIRPGTVKIVRADEGEENIFVAGGILEVQPGSVTVLADTAIRAADLDEARAVAAREKAEEALRNAKDKADIAVVEAELAMLAAQAVAARKLRQGRTH.

The protein belongs to the ATPase epsilon chain family. As to quaternary structure, F-type ATPases have 2 components, CF(1) - the catalytic core - and CF(0) - the membrane proton channel. CF(1) has five subunits: alpha(3), beta(3), gamma(1), delta(1), epsilon(1). CF(0) has three main subunits: a, b and c.

It localises to the cell inner membrane. Produces ATP from ADP in the presence of a proton gradient across the membrane. The polypeptide is ATP synthase epsilon chain (Bordetella bronchiseptica (strain ATCC BAA-588 / NCTC 13252 / RB50) (Alcaligenes bronchisepticus)).